Consider the following 681-residue polypeptide: 2-(S-pantetheinyl)-carbapenam-3-carboxylate methyltransferase (681 aa).

Residues 1 to 144 (MTVPAARSGR…IERLADHPDY (144 aa)) form the B12-binding domain. The cob(II)alamin site is built by N18, S72, Y74, V75, H103, G126, and E127. Positions 192 to 417 (RDLRFYALWE…RLYVEEPGTP (226 aa)) constitute a Radical SAM core domain. [4Fe-4S] cluster is bound by residues C206 and C210. F212 contacts 5'-deoxyadenosine. A [4Fe-4S] cluster-binding site is contributed by C213. Cob(II)alamin-binding residues include D214 and C249. 3 residues coordinate 5'-deoxyadenosine: Q312, E349, and G384.

This sequence belongs to the methyltransferase superfamily. Requires [4Fe-4S] cluster as cofactor. The cofactor is cob(II)alamin.

It carries out the reaction (2R,3R,5S)-2-(S-pantetheinyl)-carbapenam-3-carboxylate + AH2 + 2 S-adenosyl-L-methionine = (2R,3R,5S,6R)-6-(methyl)-2-(S-pantetheinyl)-carbapenam-3-carboxylate + 5'-deoxyadenosine + L-methionine + A + S-adenosyl-L-homocysteine + 2 H(+). It catalyses the reaction (2R,3R,5S,6R)-6-(methyl)-2-(S-pantetheinyl)-carbapenam-3-carboxylate + AH2 + 2 S-adenosyl-L-methionine = (2R,3R,5S,6R)-6-(ethyl)-2-(S-pantetheinyl)-carbapenam-3-carboxylate + 5'-deoxyadenosine + L-methionine + A + S-adenosyl-L-homocysteine + 2 H(+). Its pathway is antibiotic biosynthesis. Its function is as follows. Methyltransferase involved in the biosynthesis of the beta-lactam carbapenem antibiotic thienamycin. Catalyzes two consecutive S-adenosyl-L-methionine-dependent methylations to build out the C6-ethyl side chain in a stereocontrolled manner. In vitro can use methyl viologen and NADPH as the iron-sulfur cluster reductants. This chain is 2-(S-pantetheinyl)-carbapenam-3-carboxylate methyltransferase, found in Streptantibioticus cattleyicolor (strain ATCC 35852 / DSM 46488 / JCM 4925 / NBRC 14057 / NRRL 8057) (Streptomyces cattleya).